Here is a 527-residue protein sequence, read N- to C-terminus: Glutamate--cysteine ligase (527 aa).

It belongs to the glutamate--cysteine ligase type 1 family. Type 1 subfamily.

It carries out the reaction L-cysteine + L-glutamate + ATP = gamma-L-glutamyl-L-cysteine + ADP + phosphate + H(+). Its pathway is sulfur metabolism; glutathione biosynthesis; glutathione from L-cysteine and L-glutamate: step 1/2. This Pseudomonas aeruginosa (strain ATCC 15692 / DSM 22644 / CIP 104116 / JCM 14847 / LMG 12228 / 1C / PRS 101 / PAO1) protein is Glutamate--cysteine ligase.